The primary structure comprises 318 residues: Mevalonate 3-kinase (318 aa).

Leu19 lines the substrate pocket. Residues 96 to 100 (YSSQN) and 105 to 108 (SGSS) each bind ATP. Residues Glu140 and Arg144 each contribute to the substrate site. Arg185 and Ser188 together coordinate ATP.

This sequence belongs to the GHMP kinase family. Homodimer.

The catalysed reaction is (R)-mevalonate + ATP = (R)-3-phosphomevalonate + ADP + H(+). Its pathway is isoprenoid biosynthesis; isopentenyl diphosphate biosynthesis via mevalonate pathway. Functionally, catalyzes the phosphorylation of mevalonate (MVA) to yield mevalonate-3-phosphate. Functions in an alternative mevalonate pathway, only present in extreme acidophiles of the Thermoplasmatales order, which passes through mevalonate 3-phosphate rather than mevalonate 5-phosphate. The polypeptide is Mevalonate 3-kinase (Thermoplasma acidophilum (strain ATCC 25905 / DSM 1728 / JCM 9062 / NBRC 15155 / AMRC-C165)).